A 378-amino-acid polypeptide reads, in one-letter code: Erythronate-4-phosphate dehydrogenase (378 aa).

Serine 45 and threonine 66 together coordinate substrate. The NAD(+) site is built by aspartate 146 and threonine 175. Arginine 208 is a catalytic residue. Aspartate 232 contributes to the NAD(+) binding site. Glutamate 237 is a catalytic residue. The active-site Proton donor is the histidine 254. Residue glycine 257 participates in NAD(+) binding. A substrate-binding site is contributed by tyrosine 258.

This sequence belongs to the D-isomer specific 2-hydroxyacid dehydrogenase family. PdxB subfamily. In terms of assembly, homodimer.

Its subcellular location is the cytoplasm. It carries out the reaction 4-phospho-D-erythronate + NAD(+) = (R)-3-hydroxy-2-oxo-4-phosphooxybutanoate + NADH + H(+). Its pathway is cofactor biosynthesis; pyridoxine 5'-phosphate biosynthesis; pyridoxine 5'-phosphate from D-erythrose 4-phosphate: step 2/5. Functionally, catalyzes the oxidation of erythronate-4-phosphate to 3-hydroxy-2-oxo-4-phosphonooxybutanoate. This Cronobacter sakazakii (strain ATCC BAA-894) (Enterobacter sakazakii) protein is Erythronate-4-phosphate dehydrogenase.